Consider the following 67-residue polypeptide: Protein AaeX (67 aa).

Helical transmembrane passes span 10–30 (FGLSFPPVFFVLLVSLTLFFV) and 43–63 (FVWHPALFNSALFCCLFYLLF).

This sequence belongs to the AaeX family.

The protein localises to the cell membrane. This is Protein AaeX from Pectobacterium carotovorum subsp. carotovorum (strain PC1).